A 462-amino-acid chain; its full sequence is Polygalacturonase (462 aa).

The N-terminal stretch at 1–22 (MALTRLLLPISILWFCFYSSHT) is a signal peptide. A glycan (N-linked (GlcNAc...) asparagine) is linked at Asn173. The active-site Proton donor is the Asp278. A disulfide bridge links Cys280 with Cys297. N-linked (GlcNAc...) asparagine glycosylation occurs at Asn294. Residue His301 is part of the active site. A glycan (N-linked (GlcNAc...) asparagine) is linked at Asn358. Cystine bridges form between Cys407–Cys413 and Cys435–Cys460.

It belongs to the glycosyl hydrolase 28 family.

It localises to the secreted. It is found in the cell wall. It carries out the reaction (1,4-alpha-D-galacturonosyl)n+m + H2O = (1,4-alpha-D-galacturonosyl)n + (1,4-alpha-D-galacturonosyl)m.. Its function is as follows. Acts in concert with the pectinesterase, in the ripening process. Is involved in cell wall metabolism, specifically in polyuronide degradation. In Persea americana (Avocado), this protein is Polygalacturonase.